The sequence spans 289 residues: Zinc finger matrin-type protein 3 (289 aa).

Residues 1 to 42 (MILLQHAVLPPPKQPSPSPPMSVATRSTGTLQLPPQKPFGQE) are disordered. Residues 9-20 (LPPPKQPSPSPP) show a composition bias toward pro residues. The segment covering 24 to 33 (ATRSTGTLQL) has biased composition (polar residues). 2 Matrin-type zinc fingers span residues 70–100 (LYCK…KLRN) and 147–177 (DYCK…RLRL). Residues 180–191 (AQSNSFSESSEL) show a composition bias toward polar residues. The interval 180 to 201 (AQSNSFSESSELGQRRARKEGN) is disordered. The segment at 246 to 276 (FYCSMCNVGAGEEMEFRQHLESKQHKSKVSE) adopts a Matrin-type 3 zinc-finger fold.

As to quaternary structure, interacts with dsRNA. In terms of tissue distribution, highly expressed in adult brain, and moderately in adult kidney and testis. Not detected in fetal brain, heart, pancreas, adrenal gland, liver or small intestine.

Its subcellular location is the nucleus. The protein localises to the nucleolus. Its function is as follows. Acts as a bona fide target gene of p53/TP53. May play a role in the TP53-dependent growth regulatory pathway. May contribute to TP53-mediated apoptosis by regulation of TP53 expression and translocation to the nucleus and nucleolus. This chain is Zinc finger matrin-type protein 3, found in Homo sapiens (Human).